A 258-amino-acid chain; its full sequence is UPF0246 protein YaaA (258 aa).

It belongs to the UPF0246 family.

This chain is UPF0246 protein YaaA, found in Escherichia coli O157:H7.